Reading from the N-terminus, the 487-residue chain is CUGBP Elav-like family member 1 (487 aa).

An N-acetylmethionine modification is found at Met-1. Residue Thr-4 is modified to Phosphothreonine. RRM domains are found at residues 16–99 and 108–188; these read IKMF…PADS and RKLF…FADT. Lys-109 participates in a covalent cross-link: Glycyl lysine isopeptide (Lys-Gly) (interchain with G-Cter in SUMO2). Ser-179 and Ser-303 each carry phosphoserine. A disordered region spans residues 277 to 310; it reads TPSGTNALTTSSSPLSVLTSSAGSSPSSSSSNSV. Residues 283-310 show a composition bias toward low complexity; it reads ALTTSSSPLSVLTSSAGSSPSSSSSNSV. In terms of domain architecture, RRM 3 spans 402-480; that stretch reads ANLFIYHLPQ…KRLKVQLKRS (79 aa).

This sequence belongs to the CELF/BRUNOL family. As to quaternary structure, interacts with HNRNPH1; the interaction in RNA-dependent. Interacts with PARN. Component of an EIF2 complex at least composed of CELF1/CUGBP1, CALR, CALR3, EIF2S1, EIF2S2, HSP90B1 and HSPA5. Associates with polysomes.

The protein localises to the nucleus. Its subcellular location is the cytoplasm. RNA-binding protein implicated in the regulation of several post-transcriptional events. Involved in pre-mRNA alternative splicing, mRNA translation and stability. Mediates exon inclusion and/or exclusion in pre-mRNA that are subject to tissue-specific and developmentally regulated alternative splicing. Specifically activates exon 5 inclusion of cardiac isoforms of TNNT2 during heart remodeling at the juvenile to adult transition. Acts both as an activator and as a repressor of a pair of coregulated exons: promotes inclusion of the smooth muscle (SM) exon but exclusion of the non-muscle (NM) exon in actinin pre-mRNAs. Activates SM exon 5 inclusion by antagonizing the repressive effect of PTB. Promotes exclusion of exon 11 of the INSR pre-mRNA. Inhibits, together with HNRNPH1, insulin receptor (IR) pre-mRNA exon 11 inclusion in myoblast. Increases translation and controls the choice of translation initiation codon of CEBPB mRNA. Increases mRNA translation of CEBPB in aging liver. Increases translation of CDKN1A mRNA by antagonizing the repressive effect of CALR3. Mediates rapid cytoplasmic mRNA deadenylation. Recruits the deadenylase PARN to the poly(A) tail of EDEN-containing mRNAs to promote their deadenylation. Required for completion of spermatogenesis. Binds to (CUG)n triplet repeats in the 3'-UTR of transcripts such as DMPK and to Bruno response elements (BREs). Binds to muscle-specific splicing enhancer (MSE) intronic sites flanking the alternative exon 5 of TNNT2 pre-mRNA. Binds to AU-rich sequences (AREs or EDEN-like) localized in the 3'-UTR of JUN and FOS mRNAs. Binds to the IR RNA. Binds to the 5'-region of CDKN1A and CEBPB mRNAs. Binds with the 5'-region of CEBPB mRNA in aging liver. May be a specific regulator of miRNA biogenesis. Binds to primary microRNA pri-MIR140 and, with CELF2, negatively regulates the processing to mature miRNA. In Rattus norvegicus (Rat), this protein is CUGBP Elav-like family member 1 (Celf1).